We begin with the raw amino-acid sequence, 303 residues long: Aspartate carbamoyltransferase catalytic subunit (303 aa).

Carbamoyl phosphate is bound by residues Arg-51 and Thr-52. Lys-80 is an L-aspartate binding site. Carbamoyl phosphate-binding residues include Arg-101, His-129, and Gln-132. Positions 162 and 221 each coordinate L-aspartate. Carbamoyl phosphate contacts are provided by Leu-260 and Pro-261.

The protein belongs to the aspartate/ornithine carbamoyltransferase superfamily. ATCase family. In terms of assembly, heterooligomer of catalytic and regulatory chains.

The enzyme catalyses carbamoyl phosphate + L-aspartate = N-carbamoyl-L-aspartate + phosphate + H(+). It functions in the pathway pyrimidine metabolism; UMP biosynthesis via de novo pathway; (S)-dihydroorotate from bicarbonate: step 2/3. Functionally, catalyzes the condensation of carbamoyl phosphate and aspartate to form carbamoyl aspartate and inorganic phosphate, the committed step in the de novo pyrimidine nucleotide biosynthesis pathway. In Saccharolobus islandicus (strain Y.N.15.51 / Yellowstone #2) (Sulfolobus islandicus), this protein is Aspartate carbamoyltransferase catalytic subunit.